The primary structure comprises 334 residues: Chemotactic signal transduction system substrate-binding protein CosB (334 aa).

The signal sequence occupies residues 1–29; that stretch reads MMDTPEHASTSSRRQLLGMLAAGGTTAVA.

It belongs to the OsmX family.

It localises to the cell membrane. In terms of biological role, mediates chemotaxis towards compatible osmolytes. May function as a receptor that binds the osmolytes and transduces a signal to CosT. Has probably no additional role in transport. The protein is Chemotactic signal transduction system substrate-binding protein CosB (cosB) of Halobacterium salinarum (strain ATCC 29341 / DSM 671 / R1).